The following is a 203-amino-acid chain: tRNA (pseudouridine(54)-N(1))-methyltransferase (203 aa).

S-adenosyl-L-methionine contacts are provided by Leu-125, Gly-146, and Cys-179.

Belongs to the methyltransferase superfamily. TrmY family. Homodimer.

It is found in the cytoplasm. It catalyses the reaction pseudouridine(54) in tRNA + S-adenosyl-L-methionine = N(1)-methylpseudouridine(54) in tRNA + S-adenosyl-L-homocysteine + H(+). Its function is as follows. Specifically catalyzes the N1-methylation of pseudouridine at position 54 (Psi54) in tRNAs. The polypeptide is tRNA (pseudouridine(54)-N(1))-methyltransferase (Methanopyrus kandleri (strain AV19 / DSM 6324 / JCM 9639 / NBRC 100938)).